The following is a 513-amino-acid chain: Bifunctional purine biosynthesis protein PurH (513 aa).

The MGS-like domain maps to 1-146; the sequence is MPRFALLSVS…KNHAHLTILT (146 aa).

This sequence belongs to the PurH family.

It carries out the reaction (6R)-10-formyltetrahydrofolate + 5-amino-1-(5-phospho-beta-D-ribosyl)imidazole-4-carboxamide = 5-formamido-1-(5-phospho-D-ribosyl)imidazole-4-carboxamide + (6S)-5,6,7,8-tetrahydrofolate. The enzyme catalyses IMP + H2O = 5-formamido-1-(5-phospho-D-ribosyl)imidazole-4-carboxamide. It participates in purine metabolism; IMP biosynthesis via de novo pathway; 5-formamido-1-(5-phospho-D-ribosyl)imidazole-4-carboxamide from 5-amino-1-(5-phospho-D-ribosyl)imidazole-4-carboxamide (10-formyl THF route): step 1/1. The protein operates within purine metabolism; IMP biosynthesis via de novo pathway; IMP from 5-formamido-1-(5-phospho-D-ribosyl)imidazole-4-carboxamide: step 1/1. This chain is Bifunctional purine biosynthesis protein PurH, found in Synechococcus elongatus (strain ATCC 33912 / PCC 7942 / FACHB-805) (Anacystis nidulans R2).